The following is a 79-amino-acid chain: Serine protease inhibitor Kazal-type 1 (79 aa).

Positions 1-23 are cleaved as a signal peptide; sequence MKVASIFLLTALVLMSLSGNSGA. The 54-residue stretch at 26 to 79 folds into the Kazal-like domain; sequence LGREAKCTNEVNGCPRIYNPVCGTDGVTYSNECLLCMENKERQTPVLIQKSGPC. 3 disulfide bridges follow: C32-C61, C39-C58, and C47-C79.

The protein resides in the secreted. Its function is as follows. Serine protease inhibitor which exhibits anti-trypsin activity. In the pancreas, protects against trypsin-catalyzed premature activation of zymogens. In terms of biological role, in the male reproductive tract, binds to sperm heads where it modulates sperm capacitance by inhibiting calcium uptake and nitrogen oxide (NO) production. The polypeptide is Serine protease inhibitor Kazal-type 1 (SPINK1) (Bos taurus (Bovine)).